The chain runs to 69 residues: DNA-directed RNA polymerase subunit omega (69 aa).

The protein belongs to the RNA polymerase subunit omega family. The RNAP catalytic core consists of 2 alpha, 1 beta, 1 beta' and 1 omega subunit. When a sigma factor is associated with the core the holoenzyme is formed, which can initiate transcription.

The enzyme catalyses RNA(n) + a ribonucleoside 5'-triphosphate = RNA(n+1) + diphosphate. In terms of biological role, promotes RNA polymerase assembly. Latches the N- and C-terminal regions of the beta' subunit thereby facilitating its interaction with the beta and alpha subunits. This is DNA-directed RNA polymerase subunit omega from Pediococcus pentosaceus (strain ATCC 25745 / CCUG 21536 / LMG 10740 / 183-1w).